The primary structure comprises 391 residues: Phosphoglycerate kinase (391 aa).

Residues 21 to 23, R36, 59 to 62, R113, and R146 each bind substrate; these read DLN and HLGR. ATP contacts are provided by residues K197, E319, and 345–348; that span reads GGDT.

The protein belongs to the phosphoglycerate kinase family. In terms of assembly, monomer.

It is found in the cytoplasm. It carries out the reaction (2R)-3-phosphoglycerate + ATP = (2R)-3-phospho-glyceroyl phosphate + ADP. It participates in carbohydrate degradation; glycolysis; pyruvate from D-glyceraldehyde 3-phosphate: step 2/5. The sequence is that of Phosphoglycerate kinase from Shewanella sp. (strain W3-18-1).